Here is a 633-residue protein sequence, read N- to C-terminus: ATP-dependent zinc metalloprotease FtsH (633 aa).

Residues 1–19 (MTPSNEPGKQDQIPQPGPT) are Cytoplasmic-facing. A helical transmembrane segment spans residues 20–40 (IPNQYSFLWLSAAIFLMFLWL). The Periplasmic segment spans residues 41-133 (QGNNQQQQQE…SRSGRPWWQE (93 aa)). The chain crosses the membrane as a helical span at residues 134–154 (LILGFLPWILLLALMFWFWGA). Residues 155–633 (AQKRMTQGGG…LEEARSRETA (479 aa)) are Cytoplasmic-facing. Residue 226–233 (GPPGTGKT) coordinates ATP. Zn(2+) is bound at residue histidine 447. Residue glutamate 448 is part of the active site. Zn(2+) contacts are provided by histidine 451 and aspartate 523.

This sequence in the central section; belongs to the AAA ATPase family. The protein in the C-terminal section; belongs to the peptidase M41 family. In terms of assembly, homohexamer. Zn(2+) is required as a cofactor.

It localises to the cell inner membrane. Its function is as follows. Acts as a processive, ATP-dependent zinc metallopeptidase for both cytoplasmic and membrane proteins. Plays a role in the quality control of integral membrane proteins. In Marinobacter nauticus (strain ATCC 700491 / DSM 11845 / VT8) (Marinobacter aquaeolei), this protein is ATP-dependent zinc metalloprotease FtsH.